The chain runs to 564 residues: Dihydroxy-acid dehydratase (564 aa).

Residues 1 to 10 show a composition bias toward basic residues; that stretch reads MTDTRTKRRM. Positions 1–23 are disordered; sequence MTDTRTKRRMNWNSHHITQGDER. Cysteine 57 serves as a coordination point for [2Fe-2S] cluster. Residue aspartate 89 participates in Mg(2+) binding. Cysteine 130 lines the [2Fe-2S] cluster pocket. Mg(2+) is bound by residues aspartate 131 and lysine 132. The residue at position 132 (lysine 132) is an N6-carboxylysine. Cysteine 202 provides a ligand contact to [2Fe-2S] cluster. Residue glutamate 454 coordinates Mg(2+). Serine 480 (proton acceptor) is an active-site residue.

The protein belongs to the IlvD/Edd family. In terms of assembly, homodimer. The cofactor is [2Fe-2S] cluster. Mg(2+) serves as cofactor.

The enzyme catalyses (2R)-2,3-dihydroxy-3-methylbutanoate = 3-methyl-2-oxobutanoate + H2O. It carries out the reaction (2R,3R)-2,3-dihydroxy-3-methylpentanoate = (S)-3-methyl-2-oxopentanoate + H2O. Its pathway is amino-acid biosynthesis; L-isoleucine biosynthesis; L-isoleucine from 2-oxobutanoate: step 3/4. The protein operates within amino-acid biosynthesis; L-valine biosynthesis; L-valine from pyruvate: step 3/4. In terms of biological role, functions in the biosynthesis of branched-chain amino acids. Catalyzes the dehydration of (2R,3R)-2,3-dihydroxy-3-methylpentanoate (2,3-dihydroxy-3-methylvalerate) into 2-oxo-3-methylpentanoate (2-oxo-3-methylvalerate) and of (2R)-2,3-dihydroxy-3-methylbutanoate (2,3-dihydroxyisovalerate) into 2-oxo-3-methylbutanoate (2-oxoisovalerate), the penultimate precursor to L-isoleucine and L-valine, respectively. This is Dihydroxy-acid dehydratase from Deinococcus geothermalis (strain DSM 11300 / CIP 105573 / AG-3a).